Consider the following 268-residue polypeptide: Undecaprenyl-diphosphatase (268 aa).

7 helical membrane passes run 5-25, 43-63, 84-104, 107-127, 184-204, 213-233, and 248-268; these read SIISALVLGLIEGLTEFIPVS, GNTFAVLIQLGAILAILLVYF, FSVLLAFLPAALIGAAAHGFI, VLFETPMLICVVLIVGGIILY, AAEFSFFLAMPTMVGAFALDL, FDDVGLIAAGFIAAFIAGIFV, and PFAIWRILVGTAGLVGLWLLG.

It belongs to the UppP family.

It localises to the cell inner membrane. It catalyses the reaction di-trans,octa-cis-undecaprenyl diphosphate + H2O = di-trans,octa-cis-undecaprenyl phosphate + phosphate + H(+). Catalyzes the dephosphorylation of undecaprenyl diphosphate (UPP). Confers resistance to bacitracin. This Rhizobium meliloti (strain 1021) (Ensifer meliloti) protein is Undecaprenyl-diphosphatase.